Reading from the N-terminus, the 489-residue chain is N-succinylglutamate 5-semialdehyde dehydrogenase (489 aa).

Residue 216–221 participates in NAD(+) binding; it reads GSAATG. Catalysis depends on residues Glu239 and Cys273.

This sequence belongs to the aldehyde dehydrogenase family. AstD subfamily.

It carries out the reaction N-succinyl-L-glutamate 5-semialdehyde + NAD(+) + H2O = N-succinyl-L-glutamate + NADH + 2 H(+). It functions in the pathway amino-acid degradation; L-arginine degradation via AST pathway; L-glutamate and succinate from L-arginine: step 4/5. In terms of biological role, catalyzes the NAD-dependent reduction of succinylglutamate semialdehyde into succinylglutamate. This is N-succinylglutamate 5-semialdehyde dehydrogenase from Erwinia tasmaniensis (strain DSM 17950 / CFBP 7177 / CIP 109463 / NCPPB 4357 / Et1/99).